The following is a 149-amino-acid chain: Large ribosomal subunit protein bL9 (149 aa).

It belongs to the bacterial ribosomal protein bL9 family.

Functionally, binds to the 23S rRNA. This is Large ribosomal subunit protein bL9 from Pasteurella multocida (strain Pm70).